We begin with the raw amino-acid sequence, 127 residues long: Small ribosomal subunit protein uS8m (127 aa).

It belongs to the universal ribosomal protein uS8 family.

It is found in the mitochondrion. The protein is Small ribosomal subunit protein uS8m (RPS8) of Acanthamoeba castellanii (Amoeba).